Reading from the N-terminus, the 610-residue chain is Atypical kinase COQ8, mitochondrial (610 aa).

Over residues 98–111 (GVKHLQEQSSKEIK) the composition is skewed to basic and acidic residues. The disordered stretch occupies residues 98 to 144 (GVKHLQEQSSKEIKNPISQPILPNKKDEISPAKPSAIDSSIKDVTKS).

The protein belongs to the protein kinase superfamily. ADCK protein kinase family.

It localises to the mitochondrion. Its pathway is cofactor biosynthesis; ubiquinone biosynthesis. In terms of biological role, atypical kinase involved in the biosynthesis of coenzyme Q, also named ubiquinone, an essential lipid-soluble electron transporter for aerobic cellular respiration. Its substrate specificity is still unclear: may act as a protein kinase that mediates phosphorylation of coq3. According to other reports, acts as a small molecule kinase, possibly a lipid kinase that phosphorylates a prenyl lipid in the ubiquinone biosynthesis pathway, as suggested by its ability to bind coenzyme Q lipid intermediates. The chain is Atypical kinase COQ8, mitochondrial from Schizosaccharomyces pombe (strain 972 / ATCC 24843) (Fission yeast).